Reading from the N-terminus, the 142-residue chain is Ribosome-binding factor A (142 aa).

Positions 118–142 (DEAKQQEHGTVENAKQDGDKAEDDK) are disordered.

It belongs to the RbfA family. As to quaternary structure, monomer. Binds 30S ribosomal subunits, but not 50S ribosomal subunits or 70S ribosomes.

Its subcellular location is the cytoplasm. In terms of biological role, one of several proteins that assist in the late maturation steps of the functional core of the 30S ribosomal subunit. Associates with free 30S ribosomal subunits (but not with 30S subunits that are part of 70S ribosomes or polysomes). Required for efficient processing of 16S rRNA. May interact with the 5'-terminal helix region of 16S rRNA. The protein is Ribosome-binding factor A of Shewanella piezotolerans (strain WP3 / JCM 13877).